The sequence spans 357 residues: Histidinol-phosphate aminotransferase (357 aa).

The residue at position 221 (Lys221) is an N6-(pyridoxal phosphate)lysine.

This sequence belongs to the class-II pyridoxal-phosphate-dependent aminotransferase family. Histidinol-phosphate aminotransferase subfamily. The cofactor is pyridoxal 5'-phosphate.

The catalysed reaction is L-histidinol phosphate + 2-oxoglutarate = 3-(imidazol-4-yl)-2-oxopropyl phosphate + L-glutamate. The protein operates within amino-acid biosynthesis; L-histidine biosynthesis; L-histidine from 5-phospho-alpha-D-ribose 1-diphosphate: step 7/9. The protein is Histidinol-phosphate aminotransferase (hisC) of Sulfurisphaera tokodaii (strain DSM 16993 / JCM 10545 / NBRC 100140 / 7) (Sulfolobus tokodaii).